Here is a 273-residue protein sequence, read N- to C-terminus: Urease accessory protein UreD (273 aa).

It belongs to the UreD family. UreD, UreF and UreG form a complex that acts as a GTP-hydrolysis-dependent molecular chaperone, activating the urease apoprotein by helping to assemble the nickel containing metallocenter of UreC. The UreE protein probably delivers the nickel.

The protein localises to the cytoplasm. Its function is as follows. Required for maturation of urease via the functional incorporation of the urease nickel metallocenter. The protein is Urease accessory protein UreD of Rhizobium johnstonii (strain DSM 114642 / LMG 32736 / 3841) (Rhizobium leguminosarum bv. viciae).